The sequence spans 203 residues: Glycerol-3-phosphate acyltransferase (203 aa).

A run of 4 helical transmembrane segments spans residues 7-27 (TLLMILAAYLAGSISSAVLVC), 82-102 (AVSLGLIAIAACLGHIYPVFF), 118-138 (APIGDDLAICLMASWVVLLLI), and 141-161 (YSSLAAILTALLAPLYTWWLD).

This sequence belongs to the PlsY family. Probably interacts with PlsX.

The protein localises to the cell inner membrane. It catalyses the reaction an acyl phosphate + sn-glycerol 3-phosphate = a 1-acyl-sn-glycero-3-phosphate + phosphate. The protein operates within lipid metabolism; phospholipid metabolism. Its function is as follows. Catalyzes the transfer of an acyl group from acyl-phosphate (acyl-PO(4)) to glycerol-3-phosphate (G3P) to form lysophosphatidic acid (LPA). This enzyme utilizes acyl-phosphate as fatty acyl donor, but not acyl-CoA or acyl-ACP. In Shewanella baltica (strain OS223), this protein is Glycerol-3-phosphate acyltransferase.